Here is a 549-residue protein sequence, read N- to C-terminus: Cation/acetate symporter ActP (549 aa).

13 helical membrane-spanning segments follow: residues 33–53 (WQAIIMFLIFVVFTLGITYWA), 77–97 (LAIAGDYMSAASFLGISALVF), 103–123 (GLIYSLGFLVGWPIILFLIAE), 148–168 (ILSACGSLVVVALYLIAQMVG), 183–203 (IAVVLVGVLMMMYVLFGGMLA), 206–226 (WVQIIKAVLLLFGASFMAFMV), 262–282 (ISALSLGLGLMFGTAGLPHIL), 303–323 (GFMGYFYILTFIIGFGAIMLV), 355–375 (LFLGFISAVAFATILAVVAGL), 404–424 (VSKITVLILGVIAIILGVLFE), 428–448 (IAFMVGLAFAIAASCNFPIIL), 464–484 (GGWLGLITAVVLMILGPTIWV), and 493–513 (IFPYEYPALFSISVAFLGIWF).

The protein belongs to the sodium:solute symporter (SSF) (TC 2.A.21) family.

The protein localises to the cell inner membrane. Its function is as follows. Transports acetate. The sequence is that of Cation/acetate symporter ActP from Escherichia coli O8 (strain IAI1).